The following is a 324-amino-acid chain: Testisin (324 aa).

The first 21 residues, 1 to 21 (MGARGKTLVPLLVVVATAAMA), serve as a signal peptide directing secretion. Positions 22 to 54 (LQSTYLQVDPEKPELQEPDLLSGPCGHRTIPSR) are excised as a propeptide. Disulfide bonds link Cys-46-Cys-167 and Cys-80-Cys-96. One can recognise a Peptidase S1 domain in the interval 55–296 (IVGGDDAELG…HYNWIQSTMI (242 aa)). Active-site charge relay system residues include His-95 and Asp-147. Asn-170, Asn-177, and Asn-210 each carry an N-linked (GlcNAc...) asparagine glycan. Intrachain disulfides connect Cys-181–Cys-254, Cys-214–Cys-233, and Cys-244–Cys-272. Residue Ser-248 is the Charge relay system of the active site. The N-linked (GlcNAc...) asparagine glycan is linked to Asn-283. Asn-298 carries the GPI-anchor amidated asparagine lipid modification. A propeptide spans 299–324 (GLLRPDPVPLLLFLTLAWASSLLRPA) (removed in mature form).

The protein belongs to the peptidase S1 family. Testis.

Its subcellular location is the cell membrane. Functionally, could regulate proteolytic events associated with testicular germ cell maturation. In Mus musculus (Mouse), this protein is Testisin (Prss21).